The following is a 692-amino-acid chain: Elongation factor G (692 aa).

In terms of domain architecture, tr-type G spans 8 to 282 (ENTRNIGIMA…GVVDYLPSPV (275 aa)). Residues 17-24 (AHIDAGKT), 81-85 (DTPGH), and 135-138 (NKMD) contribute to the GTP site.

It belongs to the TRAFAC class translation factor GTPase superfamily. Classic translation factor GTPase family. EF-G/EF-2 subfamily.

It is found in the cytoplasm. Functionally, catalyzes the GTP-dependent ribosomal translocation step during translation elongation. During this step, the ribosome changes from the pre-translocational (PRE) to the post-translocational (POST) state as the newly formed A-site-bound peptidyl-tRNA and P-site-bound deacylated tRNA move to the P and E sites, respectively. Catalyzes the coordinated movement of the two tRNA molecules, the mRNA and conformational changes in the ribosome. This Geobacillus sp. (strain WCH70) protein is Elongation factor G.